The following is a 230-amino-acid chain: Thymine/uracil-DNA glycosylase (230 aa).

Residues C204, C211, C214, and C221 each coordinate [4Fe-4S] cluster.

Belongs to the Nth/MutY family. [4Fe-4S] cluster serves as cofactor.

It catalyses the reaction Hydrolyzes mismatched double-stranded DNA and polynucleotides, releasing free thymine.. Its function is as follows. DNA glycosylase that excises thymine from T/G mismatches and uracil from U/G mismatches. Can also process T/GO and U/GO, but not A/G, T/C and U/C. Has weak AP lyase activity. This is Thymine/uracil-DNA glycosylase from Pyrobaculum aerophilum (strain ATCC 51768 / DSM 7523 / JCM 9630 / CIP 104966 / NBRC 100827 / IM2).